The sequence spans 173 residues: Crossover junction endodeoxyribonuclease RuvC (173 aa).

Catalysis depends on residues Asp8, Glu67, and Asp139. Positions 8, 67, and 139 each coordinate Mg(2+).

It belongs to the RuvC family. In terms of assembly, homodimer which binds Holliday junction (HJ) DNA. The HJ becomes 2-fold symmetrical on binding to RuvC with unstacked arms; it has a different conformation from HJ DNA in complex with RuvA. In the full resolvosome a probable DNA-RuvA(4)-RuvB(12)-RuvC(2) complex forms which resolves the HJ. Mg(2+) is required as a cofactor.

The protein localises to the cytoplasm. It catalyses the reaction Endonucleolytic cleavage at a junction such as a reciprocal single-stranded crossover between two homologous DNA duplexes (Holliday junction).. In terms of biological role, the RuvA-RuvB-RuvC complex processes Holliday junction (HJ) DNA during genetic recombination and DNA repair. Endonuclease that resolves HJ intermediates. Cleaves cruciform DNA by making single-stranded nicks across the HJ at symmetrical positions within the homologous arms, yielding a 5'-phosphate and a 3'-hydroxyl group; requires a central core of homology in the junction. The consensus cleavage sequence is 5'-(A/T)TT(C/G)-3'. Cleavage occurs on the 3'-side of the TT dinucleotide at the point of strand exchange. HJ branch migration catalyzed by RuvA-RuvB allows RuvC to scan DNA until it finds its consensus sequence, where it cleaves and resolves the cruciform DNA. The chain is Crossover junction endodeoxyribonuclease RuvC from Klebsiella pneumoniae subsp. pneumoniae (strain ATCC 700721 / MGH 78578).